A 520-amino-acid polypeptide reads, in one-letter code: GMP synthase [glutamine-hydrolyzing] (520 aa).

A Glutamine amidotransferase type-1 domain is found at 13–205; it reads KIIVLDYGSQ…ALNICKAKGD (193 aa). Cysteine 90 functions as the Nucleophile in the catalytic mechanism. Active-site residues include histidine 179 and glutamate 181. The 190-residue stretch at 206 to 395 folds into the GMPS ATP-PPase domain; sequence WSMDNFIDMQ…LGMPDHIVWR (190 aa). 233–239 is an ATP binding site; that stretch reads SGGVDSS.

Homodimer.

It carries out the reaction XMP + L-glutamine + ATP + H2O = GMP + L-glutamate + AMP + diphosphate + 2 H(+). Its pathway is purine metabolism; GMP biosynthesis; GMP from XMP (L-Gln route): step 1/1. In terms of biological role, catalyzes the synthesis of GMP from XMP. This chain is GMP synthase [glutamine-hydrolyzing], found in Streptococcus pneumoniae (strain ATCC 700669 / Spain 23F-1).